The primary structure comprises 398 residues: Acetyl-CoA acetyltransferase (398 aa).

S2 is modified (N-acetylserine). C91 acts as the Acyl-thioester intermediate in catalysis. The CoA site is built by Y186 and K231. Y186 is a binding site for K(+). K(+)-binding residues include A248, A249, and A251. S252 is a binding site for CoA. V350 is a K(+) binding site. Residues H354 and C384 each act as proton acceptor in the active site.

It belongs to the thiolase-like superfamily. Thiolase family. Homotetramer.

The protein resides in the cytoplasm. Its subcellular location is the cytosol. It catalyses the reaction 2 acetyl-CoA = acetoacetyl-CoA + CoA. It participates in metabolic intermediate biosynthesis; (R)-mevalonate biosynthesis; (R)-mevalonate from acetyl-CoA: step 1/3. Its function is as follows. Acetyl-CoA acetyltransferase; part of the first module of ergosterol biosynthesis pathway that includes the early steps of the pathway, conserved across all eukaryotes, and which results in the formation of mevalonate from acetyl-coenzyme A (acetyl-CoA). ERG10 catalyzes the formation of acetoacetyl-CoA from acetyl-CoA. The first module starts with the action of the cytosolic acetyl-CoA acetyltransferase ERG10 that catalyzes the formation of acetoacetyl-CoA. The hydroxymethylglutaryl-CoA synthase ERG13 then condenses acetyl-CoA with acetoacetyl-CoA to form HMG-CoA. The rate-limiting step of the early module is the reduction to mevalonate by the 3-hydroxy-3-methylglutaryl-coenzyme A (HMG-CoA) reductases HMG1 and HMG2 which are derived from a single ancestral HMGR gene by gene duplication. The chain is Acetyl-CoA acetyltransferase from Saccharomyces cerevisiae (strain ATCC 204508 / S288c) (Baker's yeast).